The sequence spans 233 residues: Tetrahydromethanopterin S-methyltransferase subunit D (233 aa).

6 helical membrane passes run 4–24 (LLLIGAITAGGVLIGGGVHFV), 39–59 (VGTGTAMLAAGAGLTGLITAA), 67–87 (LMIMAAGAVGSMLMIGITMLV), 133–153 (FVSGIIGGALGGIGGGLIYWA), 166–186 (MGAAGVAAIFAVGIFFINAVI), and 209–229 (GIVACLIASIVAGALSTLLVY).

Belongs to the MtrD family. As to quaternary structure, the complex is composed of 8 subunits; MtrA, MtrB, MtrC, MtrD, MtrE, MtrF, MtrG and MtrH.

Its subcellular location is the cell membrane. It catalyses the reaction 5-methyl-5,6,7,8-tetrahydromethanopterin + coenzyme M + 2 Na(+)(in) = 5,6,7,8-tetrahydromethanopterin + methyl-coenzyme M + 2 Na(+)(out). The protein operates within one-carbon metabolism; methanogenesis from CO(2); methyl-coenzyme M from 5,10-methylene-5,6,7,8-tetrahydromethanopterin: step 2/2. Part of a complex that catalyzes the formation of methyl-coenzyme M and tetrahydromethanopterin from coenzyme M and methyl-tetrahydromethanopterin. This is an energy-conserving, sodium-ion translocating step. The protein is Tetrahydromethanopterin S-methyltransferase subunit D of Methanothermobacter marburgensis (strain ATCC BAA-927 / DSM 2133 / JCM 14651 / NBRC 100331 / OCM 82 / Marburg) (Methanobacterium thermoautotrophicum).